The chain runs to 587 residues: Aspartate--tRNA ligase (587 aa).

Glu-174 provides a ligand contact to L-aspartate. The aspartate stretch occupies residues 198–201 (QITK). Position 220 (Arg-220) interacts with L-aspartate. ATP contacts are provided by residues 220–222 (RDE) and Gln-229. His-443 is an L-aspartate binding site. Residue Glu-477 participates in ATP binding. L-aspartate is bound at residue Arg-484. An ATP-binding site is contributed by 529 to 532 (GLDR).

The protein belongs to the class-II aminoacyl-tRNA synthetase family. Type 1 subfamily. As to quaternary structure, homodimer.

It localises to the cytoplasm. It carries out the reaction tRNA(Asp) + L-aspartate + ATP = L-aspartyl-tRNA(Asp) + AMP + diphosphate. In terms of biological role, catalyzes the attachment of L-aspartate to tRNA(Asp) in a two-step reaction: L-aspartate is first activated by ATP to form Asp-AMP and then transferred to the acceptor end of tRNA(Asp). The protein is Aspartate--tRNA ligase of Streptococcus pneumoniae (strain Hungary19A-6).